The sequence spans 194 residues: uncharacterized protein (194 aa).

An HTH tetR-type domain is found at 6–66; the sequence is SGKYEKILQA…AIAENLLTHT (61 aa). A DNA-binding region (H-T-H motif) is located at residues 29-48; that stretch reads SISDIVKKAGTAQGTFYLYF.

This is an uncharacterized protein from Bacillus subtilis (strain 168).